A 206-amino-acid polypeptide reads, in one-letter code: MFYLIKKLPKFILFSLYLYAFSSISDSSGILSERLNLINSFYSTVRQKVTSSSGDIVQESKGEIWIKKPNLFKSILFSPYENIASSDGNTLWLYDSETNQVTINWIKNIISDSPLYLIIKNNKNSWENFNIKNINDTFYIYSKKLNSSFRKITIIIDKKGILKNLIILSNTNYKTYYTFNIKKTIISSDFNFNFKIPKGAYIDDQR.

A signal peptide spans 1–20; that stretch reads MFYLIKKLPKFILFSLYLYA.

This sequence belongs to the LolA family. In terms of assembly, monomer.

It is found in the periplasm. Functionally, participates in the translocation of lipoproteins from the inner membrane to the outer membrane. Only forms a complex with a lipoprotein if the residue after the N-terminal Cys is not an aspartate (The Asp acts as a targeting signal to indicate that the lipoprotein should stay in the inner membrane). This chain is Outer-membrane lipoprotein carrier protein, found in Wigglesworthia glossinidia brevipalpis.